The primary structure comprises 207 residues: Peptidyl-prolyl cis-trans isomerase FKBP16-1, chloroplastic (207 aa).

In terms of domain architecture, PPIase FKBP-type spans 104 to 207; the sequence is GDLVELNYVC…VFEIQLLKVL (104 aa).

It belongs to the FKBP-type PPIase family.

Its subcellular location is the plastid. It is found in the chloroplast thylakoid lumen. It catalyses the reaction [protein]-peptidylproline (omega=180) = [protein]-peptidylproline (omega=0). In terms of biological role, PPIases accelerate the folding of proteins. It catalyzes the cis-trans isomerization of proline imidic peptide bonds in oligopeptides. This chain is Peptidyl-prolyl cis-trans isomerase FKBP16-1, chloroplastic (FKBP16-1), found in Arabidopsis thaliana (Mouse-ear cress).